The following is a 452-amino-acid chain: 1,3-beta-glucanosyltransferase gel1 (452 aa).

A signal peptide spans Met-1–Ala-19. Cys-71 and Cys-100 are disulfide-bonded. Tyr-89, Asn-159, Glu-160, Asp-201, and Arg-206 together coordinate (1,3-beta-D-glucosyl)n. The Proton donor role is filled by Glu-160. Disulfide bonds link Cys-215/Cys-345 and Cys-233/Cys-264. A glycan (N-linked (GlcNAc...) asparagine) is linked at Asn-249. Residue Glu-261 is the Nucleophile of the active site. Residue Tyr-292 participates in (1,3-beta-D-glucosyl)n binding. The segment covering Glu-325–Gly-340 has biased composition (polar residues). Residues Glu-325–Ala-419 are disordered. Residue Asn-337 is glycosylated (N-linked (GlcNAc...) asparagine). Low complexity predominate over residues Ser-393 to Ala-419. Residue Ala-419 is the site of GPI-like-anchor amidated alanine attachment. Residues Ala-420 to Leu-452 constitute a propeptide, removed in mature form.

Belongs to the glycosyl hydrolase 72 family. In terms of processing, the GPI-like anchor contains a phosphoceramide lipid group. The anchor position has not been determined.

The protein resides in the cell membrane. Splits internally a 1,3-beta-glucan molecule and transfers the newly generated reducing end (the donor) to the non-reducing end of another 1,3-beta-glucan molecule (the acceptor) forming a 1,3-beta linkage, resulting in the elongation of 1,3-beta-glucan chains in the cell wall. Involved in cell wall morphogenesis. The chain is 1,3-beta-glucanosyltransferase gel1 (gel1) from Aspergillus fumigatus (strain CBS 144.89 / FGSC A1163 / CEA10) (Neosartorya fumigata).